The following is a 1395-amino-acid chain: DNA-directed RNA polymerase subunit beta' (1395 aa).

Zn(2+) contacts are provided by cysteine 70, cysteine 72, cysteine 85, and cysteine 88. Residues aspartate 461, aspartate 463, and aspartate 465 each contribute to the Mg(2+) site. Residues cysteine 815, cysteine 889, cysteine 896, and cysteine 899 each coordinate Zn(2+).

It belongs to the RNA polymerase beta' chain family. In terms of assembly, the RNAP catalytic core consists of 2 alpha, 1 beta, 1 beta' and 1 omega subunit. When a sigma factor is associated with the core the holoenzyme is formed, which can initiate transcription. The cofactor is Mg(2+). It depends on Zn(2+) as a cofactor.

The enzyme catalyses RNA(n) + a ribonucleoside 5'-triphosphate = RNA(n+1) + diphosphate. In terms of biological role, DNA-dependent RNA polymerase catalyzes the transcription of DNA into RNA using the four ribonucleoside triphosphates as substrates. This Ruthia magnifica subsp. Calyptogena magnifica protein is DNA-directed RNA polymerase subunit beta'.